Here is a 504-residue protein sequence, read N- to C-terminus: Sensor protein FixL (504 aa).

Positions 1–21 are disordered; that stretch reads MTDTPTQALPPKAPQAGPTVP. Residues 1-50 lie on the Cytoplasmic side of the membrane; that stretch reads MTDTPTQALPPKAPQAGPTVPGTVRRAVPGSAAAALVIAASHFAALSAFD. The chain crosses the membrane as a helical span at residues 51–71; sequence PRILLVLLVIVVLASSGGLFA. Topologically, residues 72-99 are periplasmic; that stretch reads GLAATAVSALGLALRGLLSGDTVVADWQ. Residues 100–118 form a helical membrane-spanning segment; it reads SLGLLTIAGAGIAVLGERL. Residues 119 to 504 are Cytoplasmic-facing; that stretch reads RRTRLDAVAR…TVDEEAMNDA (386 aa). A PAS domain is found at 135-202; sequence REAHLSSILD…QHDLYLSRYL (68 aa). One can recognise a PAC domain in the interval 203 to 262; sequence TTGERRIIGIGRVVTGERKDGATFPMELAVGEMHSVSGRFFTGFIRDLTERQNTEARLQE. One can recognise a Histidine kinase domain in the interval 282–497; it reads TLAHELNQPL…IFRFTLRTVD (216 aa). Phosphohistidine; by autocatalysis is present on H285.

Requires heme as cofactor.

The protein localises to the cell inner membrane. The catalysed reaction is ATP + protein L-histidine = ADP + protein N-phospho-L-histidine.. Its activity is regulated as follows. The heme moiety regulates the kinase activity. In terms of biological role, putative oxygen sensor; modulates the activity of FixJ, a transcriptional activator of nitrogen fixation fixK gene. FixL probably acts as a kinase that phosphorylates FixJ. This is Sensor protein FixL (fixL) from Azorhizobium caulinodans (strain ATCC 43989 / DSM 5975 / JCM 20966 / LMG 6465 / NBRC 14845 / NCIMB 13405 / ORS 571).